The primary structure comprises 414 residues: 26S proteasome regulatory subunit 6B homolog (414 aa).

Residues 1–33 (MAATMVLDPKPSSTPPPTLPNPYTTDSQSTDSE) are disordered. Positions 21 to 30 (NPYTTDSQST) are enriched in low complexity. A coiled-coil region spans residues 55–81 (EYVKDELKNLKREQLRSQEEVKRIQSV). 202 to 209 (GPPGTGKT) serves as a coordination point for ATP.

This sequence belongs to the AAA ATPase family.

Its subcellular location is the cytoplasm. It localises to the nucleus. Functionally, the 26S proteasome is involved in the ATP-dependent degradation of ubiquitinated proteins. The regulatory (or ATPase) complex confers ATP dependency and substrate specificity to the 26S complex. This Helianthus annuus (Common sunflower) protein is 26S proteasome regulatory subunit 6B homolog.